A 569-amino-acid chain; its full sequence is Santalene synthase (569 aa).

(2E)-geranyl diphosphate contacts are provided by Arg-284, Asp-321, Asp-325, and Arg-460. The Mg(2+) site is built by Asp-321 and Asp-325. A DDXXD motif motif is present at residues 321–325 (DDAYD). Asn-463, Thr-467, and Glu-471 together coordinate Mg(2+).

It belongs to the terpene synthase family. Tpsb subfamily. It depends on Mg(2+) as a cofactor. Requires Mn(2+) as cofactor.

The catalysed reaction is (2E,6E)-farnesyl diphosphate = (1S,5S,6R)-alpha-bergamotene + diphosphate. It carries out the reaction (2E,6E)-farnesyl diphosphate = (+)-alpha-santalene + diphosphate. The enzyme catalyses (2E,6E)-farnesyl diphosphate = (-)-beta-santalene + diphosphate. Functionally, catalyzes a mixture of sesquiterpenoids from (2E,6E)-farnesyl diphosphate in fragrance biosynthesis. Catalyzes the formation of alpha-santalene, beta-santalene, epi-beta-santalene and exo-alpha-bergamotene, as well as traces of alpha-farnesene and beta-farnesene. In Santalum austrocaledonicum (Sandalwood), this protein is Santalene synthase.